The chain runs to 344 residues: Mitogen-activated protein kinase mpkC (344 aa).

In terms of domain architecture, Protein kinase spans 19–298; sequence YANVQPVGLG…AETALQHPYL (280 aa). ATP is bound by residues 25–33 and Lys48; that span reads VGLGAFGLV. Asp140 (proton acceptor) is an active-site residue. The residue at position 170 (Thr170) is a Phosphothreonine. Residues 170-172 carry the TXY motif; that stretch reads TGY. Residue Tyr172 is modified to Phosphotyrosine.

It belongs to the protein kinase superfamily. Ser/Thr protein kinase family. MAP kinase subfamily. HOG1 sub-subfamily. Mg(2+) is required as a cofactor. In terms of processing, dually phosphorylated on Thr-170 and Tyr-172, which activates the enzyme.

The enzyme catalyses L-seryl-[protein] + ATP = O-phospho-L-seryl-[protein] + ADP + H(+). It catalyses the reaction L-threonyl-[protein] + ATP = O-phospho-L-threonyl-[protein] + ADP + H(+). Its activity is regulated as follows. Activated by tyrosine and threonine phosphorylation. Functionally, mitogen-activated protein kinase required for growth on media where sorbitol or mannitol is the sole carbon source. This Aspergillus oryzae (strain ATCC 42149 / RIB 40) (Yellow koji mold) protein is Mitogen-activated protein kinase mpkC (mpkC).